A 423-amino-acid chain; its full sequence is Major royal jelly protein 9 (423 aa).

The N-terminal stretch at 1 to 20 (MSFNIWWLILYFSIVCQAKA) is a signal peptide. 5 N-linked (GlcNAc...) asparagine glycosylation sites follow: asparagine 110, asparagine 118, asparagine 177, asparagine 196, and asparagine 345.

The protein belongs to the major royal jelly protein family. Expressed at very low levels in the hypopharyngeal glands of adult worker bees (at protein level); expression peaks at 12 days post eclosion. Secreted into bee venom in the sting apparatus (at protein level). Expressed in the brains of adult worker bees peaking at 12 days post eclosion (at protein level). Expressed in the spermatheca of adult queen bees (at protein level); expression levels are higher in mated queens than in virgin queens. Along with Mrjp8 expressed at very low levels in the head of worker bees compared to other major royal jelly proteins.

Its subcellular location is the secreted. Its function is as follows. Component of bee sting venom. Component of royal jelly, a substance produced in the hypopharyngeal gland containing proteins, free amino acids, fatty acids, sugars and other nutrients, which is fed to developing larvae by worker nurse bees; may be present only at trace levels. All larvae are fed some royal jelly (also known as worker jelly) early in their development but it forms the principal source of nutrition for larvae destined to become queen bees. Produced in the spermatheca of adult queen bees, along with other major royal jelly proteins, where it may act as a nutrient supply for sperm stored by mated queens, or be involved in energy metabolism. This chain is Major royal jelly protein 9, found in Apis mellifera (Honeybee).